Consider the following 326-residue polypeptide: tRNA uridine(34) hydroxylase (326 aa).

In terms of domain architecture, Rhodanese spans 122 to 218; the sequence is EENRCLVLDV…YGQAVGTGKW (97 aa). C178 acts as the Cysteine persulfide intermediate in catalysis.

Belongs to the TrhO family.

The catalysed reaction is uridine(34) in tRNA + AH2 + O2 = 5-hydroxyuridine(34) in tRNA + A + H2O. Its function is as follows. Catalyzes oxygen-dependent 5-hydroxyuridine (ho5U) modification at position 34 in tRNAs. This Chlamydia abortus (strain DSM 27085 / S26/3) (Chlamydophila abortus) protein is tRNA uridine(34) hydroxylase.